We begin with the raw amino-acid sequence, 488 residues long: Sucrose phosphorylase (488 aa).

Sucrose contacts are provided by residues D50, H88, 191 to 193, E233, 290 to 291, 341 to 344, and R398; these read RLD, HD, and DLYQ. D193 serves as the catalytic Nucleophile. The active-site Proton donor is the E233.

It belongs to the glycosyl hydrolase 13 family. Sucrose phosphorylase subfamily.

The enzyme catalyses sucrose + phosphate = D-fructose + alpha-D-glucose 1-phosphate. The polypeptide is Sucrose phosphorylase (Agrobacterium vitis (Rhizobium vitis)).